The sequence spans 90 residues: UPF0367 protein P9301_01411 (90 aa).

This sequence belongs to the UPF0367 family.

This chain is UPF0367 protein P9301_01411, found in Prochlorococcus marinus (strain MIT 9301).